The chain runs to 372 residues: NAD(P)H-quinone oxidoreductase subunit 1 (372 aa).

9 helical membrane-spanning segments follow: residues 27–47, 65–85, 97–117, 128–148, 176–196, 204–224, 254–274, 308–328, and 347–367; these read LLWLPLPMLMMLIVATVGVLV, PEYIGPLGILAPLADGLKLIF, WLFTLGPAVVVIPVFLSYIIV, LAMGVFLWIALSSIAPIGLLM, LALAVLAVAMMSNGLGTVEIV, ILSWNVWRQPIGFLVFWIAAL, FALFYLGAYVNLVLSALLVSV, VLGITMTLIKAYFFVFLAILL, and FLLPVGLVNLLLTAGLKLAFP.

The protein belongs to the complex I subunit 1 family. In terms of assembly, NDH-1 is composed of at least 11 different subunits.

It localises to the cellular thylakoid membrane. The enzyme catalyses a plastoquinone + NADH + (n+1) H(+)(in) = a plastoquinol + NAD(+) + n H(+)(out). It carries out the reaction a plastoquinone + NADPH + (n+1) H(+)(in) = a plastoquinol + NADP(+) + n H(+)(out). Functionally, NDH-1 shuttles electrons from an unknown electron donor, via FMN and iron-sulfur (Fe-S) centers, to quinones in the respiratory and/or the photosynthetic chain. The immediate electron acceptor for the enzyme in this species is believed to be plastoquinone. Couples the redox reaction to proton translocation, and thus conserves the redox energy in a proton gradient. This Thermosynechococcus vestitus (strain NIES-2133 / IAM M-273 / BP-1) protein is NAD(P)H-quinone oxidoreductase subunit 1.